A 459-amino-acid chain; its full sequence is O-phospho-L-seryl-tRNA:Cys-tRNA synthase 1 (459 aa).

Pyridoxal 5'-phosphate is bound by residues 152-153 (AR), N257, and 280-282 (SGH). K283 carries the N6-(pyridoxal phosphate)lysine modification.

Belongs to the SepCysS family. In terms of assembly, homodimer. Interacts with SepRS. The cofactor is pyridoxal 5'-phosphate.

The catalysed reaction is O-phospho-L-seryl-tRNA(Cys) + hydrogen sulfide + H(+) = L-cysteinyl-tRNA(Cys) + phosphate. Functionally, converts O-phospho-L-seryl-tRNA(Cys) (Sep-tRNA(Cys)) to L-cysteinyl-tRNA(Cys) (Cys-tRNA(Cys)). The polypeptide is O-phospho-L-seryl-tRNA:Cys-tRNA synthase 1 (Methanococcoides burtonii (strain DSM 6242 / NBRC 107633 / OCM 468 / ACE-M)).